The sequence spans 269 residues: MNESPAQPLTETIPVFTTQNLDIYYGSHRAVRDVSLTIPKNKITAFIGPSGCGKSTILRCFNRLNDLIESFRLEGKVLYHSQDLYSPNIDVTAVRKYIGMVFQKPNPFPKTIFDNVVYGARVNGYKGNLEELAEDSLRRAALWDEVKDKLKASGFSLSGGQQQRLCIARAIAMQPEVLLMDEPCSALDPISTLKVEELMNELKENYTIIIVTHNMQQATRVADYTAFYNAEATDKGNKVGYLVEFDRTGKVFGDPQEQETKDYVSGRFG.

The ABC transporter domain occupies 16 to 255; that stretch reads FTTQNLDIYY…DRTGKVFGDP (240 aa). 48–55 lines the ATP pocket; the sequence is GPSGCGKS.

The protein belongs to the ABC transporter superfamily. Phosphate importer (TC 3.A.1.7) family. The complex is composed of two ATP-binding proteins (PstB), two transmembrane proteins (PstC and PstA) and a solute-binding protein (PstS).

The protein resides in the cell inner membrane. The enzyme catalyses phosphate(out) + ATP + H2O = ADP + 2 phosphate(in) + H(+). Functionally, part of the ABC transporter complex PstSACB involved in phosphate import. Responsible for energy coupling to the transport system. The protein is Phosphate import ATP-binding protein PstB 1 of Synechocystis sp. (strain ATCC 27184 / PCC 6803 / Kazusa).